Here is a 371-residue protein sequence, read N- to C-terminus: RxLR effector protein PITG_12731 (371 aa).

A signal peptide spans 1 to 24 (MRFYSVLLTIVTLIASTYDAKVNA). The RxLR-dEER motif lies at 43–53 (RMLRADHADER).

Belongs to the RxLR effector family.

The protein resides in the secreted. Its subcellular location is the host nucleus. It localises to the host cytoplasm. In terms of biological role, effector that enhances P.infestans colonization of Nicotiana benthamiana leaves. In Phytophthora infestans (strain T30-4) (Potato late blight agent), this protein is RxLR effector protein PITG_12731.